The following is a 97-amino-acid chain: RxLR effector protein PexRD21 (97 aa).

The N-terminal stretch at 1–21 (MRLSYILVVVIAVTLQACVCA) is a signal peptide. The RxLR-dEER signature appears at 48–66 (RLLRGVKKRTAEREVQEER).

Belongs to the RxLR effector family.

It localises to the secreted. The protein localises to the host cell membrane. Effector that is involved in host plant infection. Contributes to virulence during the early infection stage, by inhibiting plant defense responses induced by both PAMP-triggered immunity (PTI) and effector-triggered immunity (ETI). The chain is RxLR effector protein PexRD21 from Phytophthora infestans (strain T30-4) (Potato late blight agent).